Here is a 138-residue protein sequence, read N- to C-terminus: MSGFSSRPLSTHLRQPSLAPPQGQSPALLARVNEKKAELENLKELRDLSAAVAAQMEALEQKLSTLSSGTEAIATVLANWHNVLRAISMASAKIPEPKEETEENTVPLPQTLVRIPTEHAPALQAHAEGATEEESGRG.

Residues 1–14 show a composition bias toward polar residues; that stretch reads MSGFSSRPLSTHLR. Disordered stretches follow at residues 1-25 and 116-138; these read MSGF…QGQS and PTEH…SGRG.

This sequence belongs to the DASH complex DAD2 family. As to quaternary structure, component of the DASH complex consisting of ASK1, DAD1, DAD2, DAD3, DAD4, DAM1, DUO1, HSK3, SPC19 and SPC34, with a stoichiometry of one copy of each subunit per complex. Multiple DASH complexes oligomerize to form a ring that encircles spindle microtubules and organizes the rod-like NDC80 complexes of the outer kinetochore. DASH complex oligomerization strengthens microtubule attachments. On cytoplasmic microtubules, DASH complexes appear to form patches instead of rings.

Its subcellular location is the chromosome. The protein localises to the centromere. It localises to the kinetochore. The protein resides in the cytoplasm. It is found in the cytoskeleton. Its subcellular location is the spindle. The protein localises to the nucleus. Its function is as follows. Component of the DASH complex that connects microtubules with kinetochores and couples microtubule depolymerisation to chromosome movement; it is involved in retrieving kinetochores to the spindle poles before their re-orientation on the spindle in early mitosis and allows microtubule depolymerization to pull chromosomes apart and resist detachment during anaphase. Kinetochores, consisting of a centromere-associated inner segment and a microtubule-contacting outer segment, play a crucial role in chromosome segregation by mediating the physical connection between centromeric DNA and microtubules. Kinetochores also serve as an input point for the spindle assembly checkpoint, which delays anaphase until all chromosomes have bioriented on the mitotic spindle. This chain is DASH complex subunit DAD2, found in Chaetomium thermophilum (strain DSM 1495 / CBS 144.50 / IMI 039719) (Thermochaetoides thermophila).